An 815-amino-acid chain; its full sequence is SNF1 protein kinase subunit beta-1 (815 aa).

Over residues Met-1 to Ser-11 the composition is skewed to polar residues. Disordered stretches follow at residues Met-1–Lys-88 and His-120–Arg-146. Gly-2 carries the N-myristoyl glycine lipid modification. Over residues His-12–Gln-31 the composition is skewed to basic and acidic residues. Over residues Gly-32–Arg-42 the composition is skewed to polar residues. Ser-33 is subject to Phosphoserine. 2 stretches are compositionally biased toward basic and acidic residues: residues Pro-72 to Lys-88 and His-120 to Val-129. 6 positions are modified to phosphoserine: Ser-181, Ser-198, Ser-200, Ser-206, Ser-209, and Ser-220. Disordered regions lie at residues His-311–Phe-335, His-363–Leu-389, and Pro-410–Ser-444. Residues Asn-313–Gly-326 show a composition bias toward low complexity. A Phosphoserine modification is found at Ser-331. Positions His-363–Arg-376 are enriched in basic residues. Composition is skewed to low complexity over residues Ser-377 to Leu-389 and His-433 to Ser-444. Residues Val-473–Glu-716 form a kinase-interacting sequence (KIS); required for interaction with SNF1 region. A phosphoserine mark is found at Ser-494 and Ser-497. The segment at Glu-581–Ser-616 is disordered. Positions Glu-587 to Arg-596 are enriched in basic and acidic residues. The span at Ser-599–Ser-608 shows a compositional bias: low complexity. Position 643 is a phosphoserine (Ser-643). The tract at residues Ser-724–Cys-804 is association with SNF1 kinase complex (ASC) domain; required for interaction with SNF4.

This sequence belongs to the 5'-AMP-activated protein kinase beta subunit family. Component of the SNF1 kinase complex, a heterotrimeric complex composed of the catalytic alpha subunit SNF1, one of the three related beta subunits SIP1, SIP2 or GAL83, and the regulatory gamma subunit SNF4. The beta subunit serves as a bridge between the catalytic and the regulatory subunit. Interacts (via KIS domain) with SNF1. Interacts (via ASC domain) with SNF4. Post-translationally, phosphorylated by SNF1 in vitro.

It is found in the cytoplasm. The protein localises to the vacuole membrane. Functionally, beta subunit of the SNF1 kinase complex, which is required for transcriptional, metabolic, and developmental adaptations in response to glucose limitation. Has a structural role, mediating heterotrimer formation, and a regulatory role, defining carbon source-regulated subcellular location and substrate specificity of the SNF1 kinase complex. Promotes the PKA-regulated relocalization of the SNF1 kinase complex to the vacuolar membrane in response to various types of carbon stress. The sequence is that of SNF1 protein kinase subunit beta-1 (SIP1) from Saccharomyces cerevisiae (strain RM11-1a) (Baker's yeast).